Here is a 748-residue protein sequence, read N- to C-terminus: Catalase-peroxidase 2 (748 aa).

Residues 1-24 are compositionally biased toward polar residues; the sequence is MSSDTSDSRPPNPDTKTASTSESE. Positions 1 to 43 are disordered; the sequence is MSSDTSDSRPPNPDTKTASTSESENPAIPSPKPKSGAPLRNQD. A cross-link (tryptophyl-tyrosyl-methioninium (Trp-Tyr) (with M-264)) is located at residues 113-238; sequence WHSAGTYRIH…YGATTMGLIY (126 aa). H114 (proton acceptor) is an active-site residue. Residues 238–264 constitute a cross-link (tryptophyl-tyrosyl-methioninium (Tyr-Met) (with W-113)); it reads YVNPEGPEGQPDPLAAAHDIRETFGRM. H279 lines the heme b pocket.

Belongs to the peroxidase family. Peroxidase/catalase subfamily. Homotetramer. Requires heme b as cofactor. In terms of processing, formation of the three residue Trp-Tyr-Met cross-link is important for the catalase, but not the peroxidase activity of the enzyme.

The catalysed reaction is H2O2 + AH2 = A + 2 H2O. The enzyme catalyses 2 H2O2 = O2 + 2 H2O. Its function is as follows. Bifunctional enzyme with both catalase and broad-spectrum peroxidase activity. May play a role in the intracellular survival of mycobacteria. The protein is Catalase-peroxidase 2 of Mycolicibacterium smegmatis (strain ATCC 700084 / mc(2)155) (Mycobacterium smegmatis).